The following is a 462-amino-acid chain: MEASNQDEIIGTDVIPNEQDNPEEVVPEPTSLDVPPPPPERAPSAPKRVEILDCNSLNGLMYHYFAQGDYIECKSIIGEIQSKYLERNEAAFHVRGLIARNEGELEEAMECFHKAYELSGKNKRYFYETGRCNFLLGRHQIAVEQLTKASEVMKDNPKVWYWLARAIYHFPAEKVQGKTFNPVESARTILMKPDIAKDATLICFLGRLCEELGDTSGAIAAYKSSLKLQPDNTEVMNLLGLIYLRTGQVQEGFVQLGNCLAYDPANSQAILTIGSIMQNHSDHDVALNKYRVAADVSDYNGCLWNNIGIGLLARNKPAASHSALKKAAFINPLNYKISYNLGVLHDIMNLHCSALHYIKLCTELYPQNAKAVGAMAVILSHMNDDKNARLAYKKSIELKKNPSTILNYAIFEYRMKDVTAASNALKLYKDLQASGVKCSANNKETANLLESVLKQPDQSAEQ.

Residues 1–46 (MEASNQDEIIGTDVIPNEQDNPEEVVPEPTSLDVPPPPPERAPSAP) form a disordered region. TPR repeat units follow at residues 89-122 (EAAF…SGKN), 124-156 (RYFY…MKDN), 199-232 (ATLI…QPDN), 234-266 (EVMN…DPAN), 268-300 (QAIL…SDYN), 335-368 (YKIS…YPQN), and 369-402 (AKAV…KKNP).

Belongs to the BBS4 family. As to quaternary structure, part of BBSome complex, that contains at least bbs-1, bbs-2, bbs-4, bbs-5, osm-12, bbs-8/ttc-8 and bbs-9. Interacts (via C-terminus) with bbs-5; the interaction is direct.

It localises to the cytoplasm. It is found in the cytoskeleton. Its subcellular location is the microtubule organizing center. The protein resides in the centrosome. The protein localises to the cell projection. It localises to the cilium membrane. Functionally, component of the BBSome complex. The BBSome complex is thought to function as a coat complex required for sorting of specific membrane proteins to the primary cilia. The BBSome complex is required for ciliogenesis but is dispensable for centriolar satellite function. Required for proper BBSome complex assembly and its ciliary localization. May be required for microtubule anchoring at the centrosome but not for microtubule nucleation. May be required for the dynein-mediated transport of pericentriolar proteins to the centrosome. Required, redundantly with bbs-5, for cilia biogenesis and both the assembly and movement of intraflagellar transport proteins along the ciliary axoneme. Plays a role in the removal of degraded mechanosensory receptors within the cilia. In Caenorhabditis elegans, this protein is BBSome complex member bbs-4.